The primary structure comprises 388 residues: Succinate--CoA ligase [ADP-forming] subunit beta (388 aa).

In terms of domain architecture, ATP-grasp spans 9–244 (KQLFQKYGVP…LDEEDPFEIE (236 aa)). Residues Lys-46, 53–55 (GRG), Glu-99, Leu-102, and Glu-107 contribute to the ATP site. Asn-199 and Asp-213 together coordinate Mg(2+). Substrate is bound by residues Asn-265 and 322–324 (GIL).

The protein belongs to the succinate/malate CoA ligase beta subunit family. Heterotetramer of two alpha and two beta subunits. It depends on Mg(2+) as a cofactor.

It catalyses the reaction succinate + ATP + CoA = succinyl-CoA + ADP + phosphate. It carries out the reaction GTP + succinate + CoA = succinyl-CoA + GDP + phosphate. Its pathway is carbohydrate metabolism; tricarboxylic acid cycle; succinate from succinyl-CoA (ligase route): step 1/1. Its function is as follows. Succinyl-CoA synthetase functions in the citric acid cycle (TCA), coupling the hydrolysis of succinyl-CoA to the synthesis of either ATP or GTP and thus represents the only step of substrate-level phosphorylation in the TCA. The beta subunit provides nucleotide specificity of the enzyme and binds the substrate succinate, while the binding sites for coenzyme A and phosphate are found in the alpha subunit. The chain is Succinate--CoA ligase [ADP-forming] subunit beta from Syntrophobacter fumaroxidans (strain DSM 10017 / MPOB).